The chain runs to 311 residues: Aspartate carbamoyltransferase catalytic subunit (311 aa).

Arg-58 and Thr-59 together coordinate carbamoyl phosphate. Lys-86 is a binding site for L-aspartate. Residues Arg-108, His-136, and Gln-139 each coordinate carbamoyl phosphate. 2 residues coordinate L-aspartate: Arg-169 and Arg-224. Residues Gly-265 and Pro-266 each contribute to the carbamoyl phosphate site.

Belongs to the aspartate/ornithine carbamoyltransferase superfamily. ATCase family. In terms of assembly, heterododecamer (2C3:3R2) of six catalytic PyrB chains organized as two trimers (C3), and six regulatory PyrI chains organized as three dimers (R2).

The catalysed reaction is carbamoyl phosphate + L-aspartate = N-carbamoyl-L-aspartate + phosphate + H(+). Its pathway is pyrimidine metabolism; UMP biosynthesis via de novo pathway; (S)-dihydroorotate from bicarbonate: step 2/3. Catalyzes the condensation of carbamoyl phosphate and aspartate to form carbamoyl aspartate and inorganic phosphate, the committed step in the de novo pyrimidine nucleotide biosynthesis pathway. In Geobacter sulfurreducens (strain ATCC 51573 / DSM 12127 / PCA), this protein is Aspartate carbamoyltransferase catalytic subunit.